A 535-amino-acid chain; its full sequence is Dual specificity mitogen-activated protein kinase kinase 7 (535 aa).

Ala2 is subject to N-acetylalanine. Positions 2–30 (AASSLEQKLSRLEAKLKQENREARRRIDL) form a coiled coil. The d domain stretch occupies residues 37–73 (QRPRPIIVITLSPAPAPSQRAALQLPLANDGGSRSPS). Residues 63 to 93 (LANDGGSRSPSSESSPQHPTPPTRPRHMLGL) are disordered. A compositionally biased stretch (low complexity) spans 69–79 (SRSPSSESSPQ). In terms of domain architecture, Protein kinase spans 136–396 (LENLGEMGSG…YNKLLEHSFI (261 aa)). ATP-binding positions include 142-150 (MGSGTCGQV) and Lys165. The Proton acceptor role is filled by Asp259. The residue at position 287 (Ser287) is a Phosphoserine; by MAP3K. Residue Thr291 is modified to Phosphothreonine; by MAP3K. The DVD domain stretch occupies residues 393-416 (HSFIKHYEILEVDVASWFKDVMAK). Ser427 carries the phosphoserine modification.

Belongs to the protein kinase superfamily. STE Ser/Thr protein kinase family. MAP kinase kinase subfamily. In terms of assembly, interacts with RASSF7, the interaction promotes phosphorylation. Interacts with VRK2. Interacts (via its D domain) with its substrates MAPK8/JNK1, MAPK9/JNK2 and MAPK10/JNK3. Interacts (via its DVD domain) with MAP3Ks activators like MAP3K5/ASK1 and MAP3K1/MEKK1. Interacts with SH3RF1, MAPK8IP1/JIP1, MAPK8IP2/JIP2 and MAPK8IP3/JIP3 scaffold proteins. Found in a complex with SH3RF1, RAC1, MAP3K11/MLK3, MAPK8IP1/JIP1 and MAPK8/JNK1. Found in a complex with SH3RF1, RAC2, MAP3K7/TAK1, MAPK8IP1/JIP1, MAPK8/JNK1 and MAPK9/JNK2. Mg(2+) is required as a cofactor. In terms of processing, activated by phosphorylation on Ser-287 and Thr-291 by MAP kinase kinase kinases (MAP3Ks). Expressed at high levels in brain, lung, liver, skeletal muscle, kidney, and testis and at lower levels in the heart and spleen.

It localises to the nucleus. The protein localises to the cytoplasm. It catalyses the reaction L-seryl-[protein] + ATP = O-phospho-L-seryl-[protein] + ADP + H(+). It carries out the reaction L-threonyl-[protein] + ATP = O-phospho-L-threonyl-[protein] + ADP + H(+). The catalysed reaction is L-tyrosyl-[protein] + ATP = O-phospho-L-tyrosyl-[protein] + ADP + H(+). With respect to regulation, activated by phosphorylation by specific MAP kinase kinase kinases such as MAP3K1/MEKK1, MAP3K3/MEKK3, MAP3K11/MLK3 and MAP3K12/DLK. Isoforms 3 and 4 have lower basal activity but a higher level of inducible activation, than isoforms 2, 6, 7 and 8. Its function is as follows. Dual specificity protein kinase which acts as an essential component of the MAP kinase signal transduction pathway. Essential component of the stress-activated protein kinase/c-Jun N-terminal kinase (SAP/JNK) signaling pathway. With MAP2K4/MKK4, is the one of the only known kinase to directly activate the stress-activated protein kinase/c-Jun N-terminal kinases MAPK8/JNK1, MAPK9/JNK2 and MAPK10/JNK3. MAP2K4/MKK4 and MAP2K7/MKK7 both activate the JNKs by phosphorylation, but they differ in their preference for the phosphorylation site in the Thr-Pro-Tyr motif. MAP2K4/MKK4 shows preference for phosphorylation of the Tyr residue and MAP2K7/MKK7 for the Thr residue. The monophosphorylation of JNKs on the Thr residue is sufficient to increase JNK activity indicating that MAP2K7/MKK7 is important to trigger JNK activity, while the additional phosphorylation of the Tyr residue by MAP2K4/MKK4 ensures optimal JNK activation. Has a specific role in JNK signal transduction pathway activated by pro-inflammatory cytokines. The MKK/JNK signaling pathway is also involved in mitochondrial death signaling pathway, including the release cytochrome c, leading to apoptosis. Part of a non-canonical MAPK signaling pathway, composed of the upstream MAP3K12 kinase and downstream MAP kinases MAPK1/ERK2 and MAPK3/ERK1, that enhances the AP-1-mediated transcription of APP in response to APOE. This is Dual specificity mitogen-activated protein kinase kinase 7 from Mus musculus (Mouse).